A 174-amino-acid chain; its full sequence is Glyoxylase I 4 (174 aa).

A VOC domain is found at 13–135 (SLNHVSVLCR…DGFMIEICNC (123 aa)). Residue glutamate 131 is the Proton donor/acceptor of the active site.

It belongs to the glyoxalase I family. In terms of tissue distribution, mostly expressed in roots, and, to a lower extent, in leaves, flowers, seeds and siliques.

It is found in the cell membrane. The protein localises to the cytoplasm. Involved in the detoxification and scavenging of methylglyoxal (MG), a cytotoxic aldehyde produced in response to primary metabolism alteration observed during biotic and abiotic stresses. Modulates cross-talk between salicylic acid (SA) and jasmonic acid (JA) signaling pathways during defense responses to pathogens such as Botrytis cinerea. This Arabidopsis thaliana (Mouse-ear cress) protein is Glyoxylase I 4.